The following is a 1214-amino-acid chain: Peregrin (1214 aa).

The C2H2-type zinc-finger motif lies at 21 to 47 (YECPVETCRKVYKSYSGIEYHLYHYDH). 2 disordered regions span residues 43-87 (YHYD…SPGR) and 118-177 (VVSE…PKLP). The segment covering 58–67 (LRKHKKKGRQ) has biased composition (basic residues). Residues 59 to 222 (RKHKKKGRQS…VEYDMDEEDY (164 aa)) form an interaction with KAT6A and KAT6B region. Positions 74 to 85 (QSPSPSEVSQSP) are enriched in low complexity. Positions 119 to 130 (VSEDEEAPEEAP) are enriched in acidic residues. Ser120 carries the post-translational modification Phosphoserine. Position 147 is an N6-acetyllysine (Lys147). Positions 148-167 (SGKHKNKEKRKDSNHHHHHN) are enriched in basic residues. Ser238 carries the phosphoserine modification. The PHD-type 1 zinc finger occupies 273–323 (DAVCCICNDGECQNSNVILFCDMCNLAVHQECYGVPYIPEGQWLCRRCLQS). The segment at 327–360 (AVDCALCPNKGGAFKQTDDGRWAHVVCALWIPEV) adopts a C2HC pre-PHD-type zinc-finger fold. Residues 384 to 448 (LTCYICKQRG…RKTAYCDIHT (65 aa)) form a PHD-type 2 zinc finger. A disordered region spans residues 448–489 (TPPGSARRLPALSHSEGEEDEDEEEDEGKGWSSEKVKKAKAK). 2 positions are modified to phosphoserine: Ser460 and Ser462. The segment covering 464-474 (GEEDEDEEEDE) has biased composition (acidic residues). Residues 501–821 (LAEKRAAAPV…IKKEMTALRR (321 aa)) are interaction with MEAF6 and ING5. The required for RUNX1 and RUNX2 transcriptional activation stretch occupies residues 543-1079 (YWTLKRQSRN…RGAGWLSEDE (537 aa)). Lys580 is modified (N6-acetyllysine). One can recognise a Bromo domain in the interval 628 to 732 (MQLTPFLILL…EQGGAVLRQA (105 aa)). The segment at 819–1062 (LRRKLAHQRE…VGTGRGVGHS (244 aa)) is disordered. Residues 825–838 (HQRETGRDGPERHG) show a composition bias toward basic and acidic residues. Thr858 carries the post-translational modification Phosphothreonine. The segment covering 858 to 871 (TDSAAEESSSQETS) has biased composition (low complexity). Ser860, Ser917, Ser922, and Ser926 each carry phosphoserine. Positions 993–1021 (SLPRSSSDSESSSSSSSSAASDRTSTTPS) are enriched in low complexity. The residue at position 1076 (Ser1076) is a Phosphoserine. Residues 1085–1168 (ALDLVWAKCR…RTKLVPLGVN (84 aa)) enclose the PWWP domain. Ser1187 is modified (phosphoserine).

Component of some HBO1 complex composed of KAT7/HBO1, MEAF6, ING5, and BRPF1. Component of the MOZ/MORF complex composed at least of ING5, KAT6A, KAT6B, MEAF6 and one of BRPF1, BRD1/BRPF2 and BRPF3. Interacts (via PHD-type zinc finger domains) with unmethylated histone H3 at 'Lys-4' (H3K4me0). Interacts with trimethylated 'Lys-36' of histone H3 (H3K36me3). Interacts with ING5; interaction directs BRPF1 to H4K4me3-enriched chromatin at the 5' of active genes. Interacts with KAT7. Post-translationally, acetylated by KAT6A. In terms of tissue distribution, high levels in testis.

The protein resides in the nucleus. Its subcellular location is the chromosome. It localises to the cytoplasm. Scaffold subunit of various histone acetyltransferase (HAT) complexes, such as the MOZ/MORF and HBO1 complexes, which have a histone H3 acetyltransferase activity. Plays a key role in HBO1 complex by directing KAT7/HBO1 specificity towards histone H3 'Lys-14' acetylation (H3K14ac). Some HAT complexes preferentially mediate histone H3 'Lys-23' (H3K23ac) acetylation. Positively regulates the transcription of RUNX1 and RUNX2. The chain is Peregrin from Homo sapiens (Human).